The following is a 101-amino-acid chain: A-type ATP synthase subunit F (101 aa).

The protein belongs to the V-ATPase F subunit family. Has multiple subunits with at least A(3), B(3), C, D, E, F, H, I and proteolipid K(x).

The protein resides in the cell membrane. Functionally, component of the A-type ATP synthase that produces ATP from ADP in the presence of a proton gradient across the membrane. In Archaeoglobus fulgidus (strain ATCC 49558 / DSM 4304 / JCM 9628 / NBRC 100126 / VC-16), this protein is A-type ATP synthase subunit F.